The sequence spans 435 residues: Endosome-associated-trafficking regulator 1 (435 aa).

Phosphoserine is present on residues Ser18 and Ser147. Disordered regions lie at residues 136 to 185 (ASRH…TGWS) and 225 to 251 (ESLPSWALSDTDSRVSPASPAGSPSAD). The span at 173–182 (LLDEEEDEDT) shows a compositional bias: acidic residues. The required for interaction with PTPN13 stretch occupies residues 173 to 198 (LLDEEEDEDTGWSGAYLPSAIEQTHP). Over residues 240–250 (SPASPAGSPSA) the composition is skewed to low complexity. 2 positions are modified to phosphoserine: Ser243 and Ser247. Residues 261–371 (DRHLRTLQIS…FQRENEALRC (111 aa)) are a coiled coil.

The protein belongs to the ENTR1 family. In terms of assembly, found in a complex with ENTR1, PTPN13 and GIT1. Interacts with PTPN13 (via the FERM domain). Interacts (via N-terminus) with GIT1 (via N- and C-terminus); this interaction is direct. Interacts with NOD2. Interacts (via N-terminus) with IFT88. Interacts with VPS35. In terms of processing, phosphorylated. In terms of tissue distribution, expressed in the colon (at protein level).

It is found in the cytoplasm. The protein resides in the early endosome. Its subcellular location is the endosome. The protein localises to the recycling endosome. It localises to the midbody. It is found in the cytoskeleton. The protein resides in the microtubule organizing center. Its subcellular location is the centrosome. The protein localises to the cilium basal body. In terms of biological role, endosome-associated protein that plays a role in membrane receptor sorting, cytokinesis and ciliogenesis. Involved in the endosome-to-plasma membrane trafficking and recycling of SNX27-retromer-dependent cargo proteins, such as GLUT1. Involved in the regulation of cytokinesis; the function may involve PTPN13 and GIT1. Plays a role in the formation of cilia. Involved in cargo protein localization, such as PKD2, at primary cilia. Involved in the presentation of the tumor necrosis factor (TNF) receptor TNFRSF1A on the cell surface, and hence in the modulation of the TNF-induced apoptosis. This chain is Endosome-associated-trafficking regulator 1, found in Homo sapiens (Human).